Here is a 343-residue protein sequence, read N- to C-terminus: Dihydroorotate dehydrogenase (quinone) (343 aa).

FMN-binding positions include 61 to 65 (AGLDK) and T85. Position 65 (K65) interacts with substrate. Substrate is bound at residue 110 to 114 (NRMGF). Residues N138 and N171 each contribute to the FMN site. N171 lines the substrate pocket. Catalysis depends on S174, which acts as the Nucleophile. A substrate-binding site is contributed by N176. Positions 216 and 244 each coordinate FMN. Residue 245–246 (NT) participates in substrate binding. FMN is bound by residues G267, G296, and 317-318 (YS).

It belongs to the dihydroorotate dehydrogenase family. Type 2 subfamily. As to quaternary structure, monomer. The cofactor is FMN.

The protein localises to the cell membrane. The catalysed reaction is (S)-dihydroorotate + a quinone = orotate + a quinol. It participates in pyrimidine metabolism; UMP biosynthesis via de novo pathway; orotate from (S)-dihydroorotate (quinone route): step 1/1. Its function is as follows. Catalyzes the conversion of dihydroorotate to orotate with quinone as electron acceptor. The chain is Dihydroorotate dehydrogenase (quinone) from Pseudomonas syringae pv. syringae (strain B728a).